The primary structure comprises 90 residues: Small ribosomal subunit protein bS20 (90 aa).

The protein belongs to the bacterial ribosomal protein bS20 family.

Binds directly to 16S ribosomal RNA. The protein is Small ribosomal subunit protein bS20 of Desulfitobacterium hafniense (strain DSM 10664 / DCB-2).